Reading from the N-terminus, the 475-residue chain is tRNA-2-methylthio-N(6)-dimethylallyladenosine synthase (475 aa).

Residues 1–10 (MQETTVKRDG) show a composition bias toward basic and acidic residues. Positions 1 to 22 (MQETTVKRDGASPSDAGTPATT) are disordered. The 118-residue stretch at 27-144 (GKLYIRTFGC…LPDLIKRRRA (118 aa)) folds into the MTTase N-terminal domain. [4Fe-4S] cluster contacts are provided by cysteine 36, cysteine 73, cysteine 107, cysteine 181, cysteine 185, and cysteine 188. Residues 167-400 (RVDGATAFVS…QALINQQAAA (234 aa)) form the Radical SAM core domain. The TRAM domain occupies 403–466 (QGMIGTRQRV…TNSLRGRVAG (64 aa)).

It belongs to the methylthiotransferase family. MiaB subfamily. Monomer. Requires [4Fe-4S] cluster as cofactor.

It localises to the cytoplasm. The catalysed reaction is N(6)-dimethylallyladenosine(37) in tRNA + (sulfur carrier)-SH + AH2 + 2 S-adenosyl-L-methionine = 2-methylsulfanyl-N(6)-dimethylallyladenosine(37) in tRNA + (sulfur carrier)-H + 5'-deoxyadenosine + L-methionine + A + S-adenosyl-L-homocysteine + 2 H(+). In terms of biological role, catalyzes the methylthiolation of N6-(dimethylallyl)adenosine (i(6)A), leading to the formation of 2-methylthio-N6-(dimethylallyl)adenosine (ms(2)i(6)A) at position 37 in tRNAs that read codons beginning with uridine. This is tRNA-2-methylthio-N(6)-dimethylallyladenosine synthase from Bordetella parapertussis (strain 12822 / ATCC BAA-587 / NCTC 13253).